A 158-amino-acid chain; its full sequence is 6,7-dimethyl-8-ribityllumazine synthase (158 aa).

Residues Phe-22, 56–58 (ALE), and 80–82 (VVI) each bind 5-amino-6-(D-ribitylamino)uracil. Residue 85–86 (ET) participates in (2S)-2-hydroxy-3-oxobutyl phosphate binding. The active-site Proton donor is the His-88. Asn-113 contributes to the 5-amino-6-(D-ribitylamino)uracil binding site. Arg-127 contacts (2S)-2-hydroxy-3-oxobutyl phosphate.

This sequence belongs to the DMRL synthase family.

It catalyses the reaction (2S)-2-hydroxy-3-oxobutyl phosphate + 5-amino-6-(D-ribitylamino)uracil = 6,7-dimethyl-8-(1-D-ribityl)lumazine + phosphate + 2 H2O + H(+). It participates in cofactor biosynthesis; riboflavin biosynthesis; riboflavin from 2-hydroxy-3-oxobutyl phosphate and 5-amino-6-(D-ribitylamino)uracil: step 1/2. In terms of biological role, catalyzes the formation of 6,7-dimethyl-8-ribityllumazine by condensation of 5-amino-6-(D-ribitylamino)uracil with 3,4-dihydroxy-2-butanone 4-phosphate. This is the penultimate step in the biosynthesis of riboflavin. This is 6,7-dimethyl-8-ribityllumazine synthase from Neisseria meningitidis serogroup C (strain 053442).